A 427-amino-acid chain; its full sequence is N-myc proto-oncogene protein (427 aa).

Disordered stretches follow at residues 45-79, 144-173, 195-255, and 297-349; these read FELLPTPPLSPSRPAPGAPSGRGPGAVGRSGSVGL, EKLQNKTPAAPPPPPGTAGSPPVPARSGRA, AAEG…STNK, and APSP…RNHN. Composition is skewed to pro residues over residues 49–61 and 152–167; these read PTPPLSPSRPAPG and AAPPPPPGTAGSPPVP. A compositionally biased stretch (low complexity) spans 210–221; the sequence is RASSSSSSSGDD. Over residues 222-242 the composition is skewed to acidic residues; sequence TLSDSEDDEDEEEEDEEEEID. Residues S224 and S226 each carry the phosphoserine; by CK2 modification. A bHLH domain is found at 343–396; that stretch reads ERRRNHNILERQRANDLRSSFLTLRDHVLSELVQNEKAAKVVILKKATEYVHSL. Residues 396-417 are leucine-zipper; sequence LQAEEQKLLLEKEKLQARQEQL.

Efficient DNA binding requires dimerization with another bHLH protein. Binds DNA as a heterodimer with MAX.

Its subcellular location is the nucleus. This is N-myc proto-oncogene protein (MYCN) from Serinus canaria (Island canary).